Reading from the N-terminus, the 284-residue chain is Nucleotide-binding protein Pput_0988 (284 aa).

Residue 8–15 (GRSGSGKS) coordinates ATP. 60 to 63 (DARN) is a binding site for GTP.

The protein belongs to the RapZ-like family.

Displays ATPase and GTPase activities. In Pseudomonas putida (strain ATCC 700007 / DSM 6899 / JCM 31910 / BCRC 17059 / LMG 24140 / F1), this protein is Nucleotide-binding protein Pput_0988.